The primary structure comprises 123 residues: Fluoride-specific ion channel FluC (123 aa).

Transmembrane regions (helical) follow at residues 7–27, 39–59, 68–88, and 100–120; these read VAIA…SGIL, LVNS…FWGI, FFGT…YETF, and ALNI…GFIL. Glycine 75 and serine 78 together coordinate Na(+).

It belongs to the fluoride channel Fluc/FEX (TC 1.A.43) family.

Its subcellular location is the cell membrane. It carries out the reaction fluoride(in) = fluoride(out). Na(+) is not transported, but it plays an essential structural role and its presence is essential for fluoride channel function. Its function is as follows. Fluoride-specific ion channel. Important for reducing fluoride concentration in the cell, thus reducing its toxicity. In Thermococcus onnurineus (strain NA1), this protein is Fluoride-specific ion channel FluC.